Consider the following 268-residue polypeptide: Ubiquinone biosynthesis protein COQ4 homolog, mitochondrial (268 aa).

Zn(2+)-binding residues include His171, Asp172, His175, and Glu187.

It belongs to the COQ4 family. As to quaternary structure, component of a multi-subunit COQ enzyme complex. Zn(2+) is required as a cofactor.

The protein localises to the mitochondrion inner membrane. The enzyme catalyses a 4-hydroxy-3-methoxy-5-(all-trans-polyprenyl)benzoate + H(+) = a 2-methoxy-6-(all-trans-polyprenyl)phenol + CO2. It participates in cofactor biosynthesis; ubiquinone biosynthesis. In terms of biological role, lyase that catalyzes the C1-decarboxylation of 4-hydroxy-3-methoxy-5-(all-trans-polyprenyl)benzoic acid into 2-methoxy-6-(all-trans-polyprenyl)phenol during ubiquinone biosynthesis. The sequence is that of Ubiquinone biosynthesis protein COQ4 homolog, mitochondrial from Drosophila sechellia (Fruit fly).